A 673-amino-acid chain; its full sequence is Ion-translocating oxidoreductase complex subunit C (673 aa).

2 consecutive 4Fe-4S ferredoxin-type domains span residues 368-397 and 407-436; these read MGAPQEETSCIRCSACADACPADLLPQQLY and KATAHHIADCIECGACAWVCPSNIPLVQYF. The [4Fe-4S] cluster site is built by C377, C380, C383, C387, C416, C419, C422, and C426. Residues 529–554 form a disordered region; that stretch reads EARKAQARAKQAGHPMADSATSGDDP.

Belongs to the 4Fe4S bacterial-type ferredoxin family. RnfC subfamily. As to quaternary structure, the complex is composed of six subunits: RsxA, RsxB, RsxC, RsxD, RsxE and RsxG. [4Fe-4S] cluster serves as cofactor.

It localises to the cell inner membrane. Part of a membrane-bound complex that couples electron transfer with translocation of ions across the membrane. Required to maintain the reduced state of SoxR. This Salmonella arizonae (strain ATCC BAA-731 / CDC346-86 / RSK2980) protein is Ion-translocating oxidoreductase complex subunit C.